A 312-amino-acid chain; its full sequence is MALALCCMSHSPLLNLPGPSRDLLDDIDAAIARARGFVEDYDPQLVVIFSPDHYNGFFYKVMPPFCIGSSASGVGDYGTHAGPLDVPEKLAVDCAQAVLDAGVDIAVSASMDVDHGTVQPLEKLFGTAISRPVIPVFVNAIGVPLGPMHRCRALGAAVGTYLATLDKRVLVMGSGGLSHSPPVPTLATAPEPVLQRIVHGAPMTAEQRQARQAAVIDAARSFAAGDSALQPLNPTWDHRFLEIIDRGSLSELDRWSNSFVTHEGGGSAHEIRTWVAAFAALQAAGPYETTMRYYTPAPELIAGFAIRTARPK.

Histidine 115 serves as the catalytic Proton donor. Histidine 179 acts as the Proton acceptor in catalysis.

The protein belongs to the LigB/MhpB extradiol dioxygenase family. In terms of assembly, homotetramer. The cofactor is Fe(2+).

The catalysed reaction is 3-(2,3-dihydroxyphenyl)propanoate + O2 = (2Z,4E)-2-hydroxy-6-oxonona-2,4-dienedioate + H(+). The enzyme catalyses (2E)-3-(2,3-dihydroxyphenyl)prop-2-enoate + O2 = (2Z,4E,7E)-2-hydroxy-6-oxonona-2,4,7-trienedioate + H(+). The protein operates within aromatic compound metabolism; 3-phenylpropanoate degradation. Functionally, catalyzes the non-heme iron(II)-dependent oxidative cleavage of 2,3-dihydroxyphenylpropionic acid and 2,3-dihydroxicinnamic acid into 2-hydroxy-6-ketononadienedioate and 2-hydroxy-6-ketononatrienedioate, respectively. This Mycolicibacterium paratuberculosis (strain ATCC BAA-968 / K-10) (Mycobacterium paratuberculosis) protein is 2,3-dihydroxyphenylpropionate/2,3-dihydroxicinnamic acid 1,2-dioxygenase.